The sequence spans 184 residues: Photosystem I assembly protein Ycf4 (184 aa).

A run of 2 helical transmembrane segments spans residues 22 to 42 (FFWAFILFLGSLGFLLVGTSS) and 57 to 77 (IIFFPQGIVMSFYGIAGLFIS).

It belongs to the Ycf4 family.

It is found in the plastid. The protein localises to the chloroplast thylakoid membrane. In terms of biological role, seems to be required for the assembly of the photosystem I complex. The polypeptide is Photosystem I assembly protein Ycf4 (Aethionema grandiflorum (Persian stone-cress)).